The sequence spans 938 residues: Isoleucine--tRNA ligase (938 aa).

Positions 58-68 (PYANGSIHIGH) match the 'HIGH' region motif. An N6-acetyllysine modification is found at Lys-183. Glu-561 contributes to the L-isoleucyl-5'-AMP binding site. The short motif at 602–606 (KMSKS) is the 'KMSKS' region element. Lys-605 provides a ligand contact to ATP. Zn(2+) contacts are provided by Cys-901, Cys-904, Cys-921, and Cys-924.

Belongs to the class-I aminoacyl-tRNA synthetase family. IleS type 1 subfamily. As to quaternary structure, monomer. The cofactor is Zn(2+).

The protein localises to the cytoplasm. It catalyses the reaction tRNA(Ile) + L-isoleucine + ATP = L-isoleucyl-tRNA(Ile) + AMP + diphosphate. Functionally, catalyzes the attachment of isoleucine to tRNA(Ile). As IleRS can inadvertently accommodate and process structurally similar amino acids such as valine, to avoid such errors it has two additional distinct tRNA(Ile)-dependent editing activities. One activity is designated as 'pretransfer' editing and involves the hydrolysis of activated Val-AMP. The other activity is designated 'posttransfer' editing and involves deacylation of mischarged Val-tRNA(Ile). In Escherichia coli O9:H4 (strain HS), this protein is Isoleucine--tRNA ligase.